The chain runs to 339 residues: Coproporphyrin III ferrochelatase (339 aa).

Fe-coproporphyrin III contacts are provided by serine 52 and tyrosine 121. Residues histidine 181 and glutamate 264 each contribute to the Fe(2+) site.

It belongs to the ferrochelatase family.

The protein localises to the cytoplasm. It catalyses the reaction Fe-coproporphyrin III + 2 H(+) = coproporphyrin III + Fe(2+). The protein operates within porphyrin-containing compound metabolism; protoheme biosynthesis. Its function is as follows. Involved in coproporphyrin-dependent heme b biosynthesis. Catalyzes the insertion of ferrous iron into coproporphyrin III to form Fe-coproporphyrin III. In Mycolicibacterium vanbaalenii (strain DSM 7251 / JCM 13017 / BCRC 16820 / KCTC 9966 / NRRL B-24157 / PYR-1) (Mycobacterium vanbaalenii), this protein is Coproporphyrin III ferrochelatase.